The chain runs to 837 residues: Amyloid-beta A4 precursor protein-binding family A member 1 (837 aa).

3 disordered regions span residues 1–93 (MNHL…DTAE), 238–342 (YDER…SKEK), and 358–435 (EEVK…ESRK). A compositionally biased stretch (acidic residues) spans 23 to 38 (ESVEADLEHPEVEEEQ). Residues serine 78, serine 242, serine 246, serine 248, serine 263, serine 280, and serine 285 each carry the phosphoserine modification. Positions 226-314 (YRQEALGARL…TPAGGRPDSP (89 aa)) are munc-18-1 binding. Positions 238–254 (YDERSDGESDSPEKEAE) are enriched in basic and acidic residues. At threonine 305 the chain carries Phosphothreonine. 2 positions are modified to phosphoserine: serine 313 and serine 367. Threonine 370 is modified (phosphothreonine). The tract at residues 373–436 (EPKEPIWVMR…ASTNKESRKS (64 aa)) is LIN-2/CASK binding. Over residues 387–398 (PTRDCDDQRPMD) the composition is skewed to basic and acidic residues. Over residues 399 to 418 (GDSPSPGSSSPLGAESSSTS) the composition is skewed to low complexity. Phosphoserine is present on residues serine 401, serine 403, serine 408, and serine 568. Residues 457–643 (DGIIFAANYL…LLNTQDMYND (187 aa)) form the PID domain. Positions 626–641 (LSQKEYSDLLNTQDMY) are autoinhibitory helix linker. 2 consecutive PDZ domains span residues 656–742 (DVFI…IVRC) and 747–822 (TVLI…TMPA).

Part of a multimeric complex containing STXBP1 and STX1A. Interacts with STXBP1. Also part of the brain-specific heterotrimeric complex LIN-10/X11-alpha, LIN-2/CASK, and LIN7. Component of the brain-specific heterotrimeric complex (LIN-10-LIN-2-LIN-7 complex) composed of at least APBA1, CASK, and LIN7, which associates with the motor protein KIF17 to transport vesicles along microtubules. Within the complex, interacts (via PDZ domain) with the motor protein KIF17; the interaction is direct and is required for association of KIF17 with the cargo that is to be transported. Both isoform 1 and isoform 2 bind to the cytoplasmic domain of amyloid protein (APP). Interacts (via PDZ 1 and 2 domains) with FSPB. Isoform 2, but not isoform 1, interacts (via its truncated PID domain) with active, GTP-bound RAB6A and RAB6B. As to expression, brain and spinal cord. Isoform 2 is expressed in testis and brain, but not detected in lung, liver or spleen.

Its subcellular location is the cytoplasm. The protein resides in the perinuclear region. The protein localises to the nucleus. It is found in the golgi apparatus. Functionally, putative function in synaptic vesicle exocytosis by binding to Munc18-1, an essential component of the synaptic vesicle exocytotic machinery. May modulate processing of the amyloid-beta precursor protein (APP) and hence formation of APP-beta. Component of the LIN-10-LIN-2-LIN-7 complex, which associates with the motor protein KIF17 to transport vesicles containing N-methyl-D-aspartate (NMDA) receptor subunit NR2B along microtubules. The chain is Amyloid-beta A4 precursor protein-binding family A member 1 (APBA1) from Homo sapiens (Human).